We begin with the raw amino-acid sequence, 92 residues long: Alpha-defensin 25 (92 aa).

Positions 1–19 (MKTLVLLSALALLAFQVQA) are cleaved as a signal peptide. Positions 20–57 (DPIQNRDEESKIDEQPGKEDQAVSVSFGDPEGSSLQEE) are excised as a propeptide. Residues 24–40 (NRDEESKIDEQPGKEDQ) are compositionally biased toward basic and acidic residues. The interval 24 to 53 (NRDEESKIDEQPGKEDQAVSVSFGDPEGSS) is disordered. Cystine bridges form between Cys-63–Cys-92, Cys-65–Cys-80, and Cys-70–Cys-91.

The protein belongs to the alpha-defensin family.

The protein localises to the secreted. In terms of biological role, may have microbicidal activities. This is Alpha-defensin 25 (Defa25) from Mus musculus (Mouse).